Here is a 417-residue protein sequence, read N- to C-terminus: DnaJ protein homolog ANJ1 (417 aa).

One can recognise a J domain in the interval 11–76 (STRYYEILGV…REIYDQYGED (66 aa)). The CR-type zinc finger occupies 135-219 (GTTKKLSLSR…CKGEKVVQEK (85 aa)). CXXCXGXG motif repeat units lie at residues 148–155 (CSKCTGKG), 164–171 (CSGCQGTG), and 191–198 (CNECKGTG). One copy of the CXXCXGXG motif; approximate repeat lies at 207-214 (CPQCKGEK). Residues 384-417 (IEEEMKRKQTQAQQEAYDEDDEPAGGQRVQCAQQ) are disordered. Residue Cys-414 is modified to Cysteine methyl ester. A lipid anchor (S-farnesyl cysteine) is attached at Cys-414. A propeptide spans 415–417 (AQQ) (removed in mature form).

It localises to the membrane. Its function is as follows. Plays a continuous role in plant development probably in the structural organization of compartments. The protein is DnaJ protein homolog ANJ1 of Atriplex nummularia (Old man saltbush).